Here is a 620-residue protein sequence, read N- to C-terminus: Probable serine/threonine-protein kinase RTK1 (620 aa).

Disordered stretches follow at residues 1 to 20 (MVKETPLHSSSSTSLSSLFR), 29 to 130 (AKIF…PVRT), 153 to 186 (KDAFHHPHPVRSTAHSNISTVSSAKSDTPSSNLS), 210 to 237 (QASTPGSVELQHNSSSGSDDTSSRKKKS), and 252 to 271 (HDNHHHHHHHNRGSTPTKPK). Residues 7-18 (LHSSSSTSLSSL) are compositionally biased toward low complexity. Residues 56-76 (KNTDSDQEDQIKYNKPNDRRS) are compositionally biased toward basic and acidic residues. T58 carries the post-translational modification Phosphothreonine. Phosphoserine is present on S60. Composition is skewed to polar residues over residues 95–107 (VASSTLTGISPTS), 165–186 (TAHSNISTVSSAKSDTPSSNLS), and 210–222 (QASTPGSVELQHN). Residue S216 is modified to Phosphoserine. Residues 254 to 263 (NHHHHHHHNR) show a composition bias toward basic residues. The Protein kinase domain occupies 302-575 (GIPGRKLGEG…MNDVVKDDWL (274 aa)). ATP-binding positions include 308–316 (LGEGASGSV) and K330. A Glycyl lysine isopeptide (Lys-Gly) (interchain with G-Cter in ubiquitin) cross-link involves residue K334. The active-site Proton acceptor is the D430.

It belongs to the protein kinase superfamily. Ser/Thr protein kinase family. As to quaternary structure, interacts with ribosome biogenesis factors ARC1, CKA2 and GUS1.

It catalyses the reaction L-seryl-[protein] + ATP = O-phospho-L-seryl-[protein] + ADP + H(+). The enzyme catalyses L-threonyl-[protein] + ATP = O-phospho-L-threonyl-[protein] + ADP + H(+). Its function is as follows. Probable serine/threonine-protein kinase that may be involved in ribosome biogenesis. This Saccharomyces cerevisiae (strain ATCC 204508 / S288c) (Baker's yeast) protein is Probable serine/threonine-protein kinase RTK1 (RTK1).